Here is an 88-residue protein sequence, read N- to C-terminus: Three-finger toxin 3FTx-2 (88 aa).

An N-terminal signal peptide occupies residues 1–21 (MKTLLLTLVVVTIVCLDLGNT). 4 cysteine pairs are disulfide-bonded: C27–C48, C41–C66, C70–C81, and C82–C87.

It belongs to the three-finger toxin family. Ancestral subfamily. Orphan group II sub-subfamily. As to expression, expressed by the venom gland.

The protein resides in the secreted. Functionally, binds with low affinity to muscular (alpha-1-beta-1-delta-epsilon/CHRNA1-CHRNB1-CHRND-CHRNE) and very low affinity to neuronal (alpha-7/CHRNA7) nicotinic acetylcholine receptor (nAChR). The polypeptide is Three-finger toxin 3FTx-2 (Micrurus corallinus (Brazilian coral snake)).